We begin with the raw amino-acid sequence, 435 residues long: Trigger factor (435 aa).

The PPIase FKBP-type domain maps to 183–263 (GDFINVDVTI…VKTIWQGNMP (81 aa)).

Belongs to the FKBP-type PPIase family. Tig subfamily.

It localises to the cytoplasm. The catalysed reaction is [protein]-peptidylproline (omega=180) = [protein]-peptidylproline (omega=0). Its function is as follows. Involved in protein export. Acts as a chaperone by maintaining the newly synthesized protein in an open conformation. Functions as a peptidyl-prolyl cis-trans isomerase. In Protochlamydia amoebophila (strain UWE25), this protein is Trigger factor.